Here is a 309-residue protein sequence, read N- to C-terminus: Porphobilinogen deaminase (309 aa).

S-(dipyrrolylmethanemethyl)cysteine is present on Cys244.

It belongs to the HMBS family. In terms of assembly, monomer. The cofactor is dipyrromethane.

The enzyme catalyses 4 porphobilinogen + H2O = hydroxymethylbilane + 4 NH4(+). Its pathway is porphyrin-containing compound metabolism; protoporphyrin-IX biosynthesis; coproporphyrinogen-III from 5-aminolevulinate: step 2/4. Tetrapolymerization of the monopyrrole PBG into the hydroxymethylbilane pre-uroporphyrinogen in several discrete steps. This Listeria innocua serovar 6a (strain ATCC BAA-680 / CLIP 11262) protein is Porphobilinogen deaminase.